The sequence spans 391 residues: Histidinol-phosphate aminotransferase (391 aa).

Lysine 245 carries the N6-(pyridoxal phosphate)lysine modification.

Belongs to the class-II pyridoxal-phosphate-dependent aminotransferase family. Histidinol-phosphate aminotransferase subfamily. In terms of assembly, homodimer. It depends on pyridoxal 5'-phosphate as a cofactor.

It carries out the reaction L-histidinol phosphate + 2-oxoglutarate = 3-(imidazol-4-yl)-2-oxopropyl phosphate + L-glutamate. Its pathway is amino-acid biosynthesis; L-histidine biosynthesis; L-histidine from 5-phospho-alpha-D-ribose 1-diphosphate: step 7/9. The polypeptide is Histidinol-phosphate aminotransferase (Bifidobacterium adolescentis (strain ATCC 15703 / DSM 20083 / NCTC 11814 / E194a)).